A 427-amino-acid polypeptide reads, in one-letter code: Tol-Pal system protein TolB (427 aa).

The first 23 residues, Met-1–Ala-23, serve as a signal peptide directing secretion.

This sequence belongs to the TolB family. In terms of assembly, the Tol-Pal system is composed of five core proteins: the inner membrane proteins TolA, TolQ and TolR, the periplasmic protein TolB and the outer membrane protein Pal. They form a network linking the inner and outer membranes and the peptidoglycan layer.

Its subcellular location is the periplasm. In terms of biological role, part of the Tol-Pal system, which plays a role in outer membrane invagination during cell division and is important for maintaining outer membrane integrity. This is Tol-Pal system protein TolB from Haemophilus influenzae (strain 86-028NP).